Consider the following 195-residue polypeptide: UMP-CMP kinase (195 aa).

ATP is bound at residue 17–22 (GSGKGT). Residues 37-66 (SAGDLLRQEQQSGSKDGEMIATMIKNGEIV) form an NMP region. A ribonucleoside 5'-phosphate contacts are provided by residues Arg-43, 64–66 (EIV), and 91–94 (GFPR). Asn-98 contributes to the CMP binding site. Residues 131–141 (KRGESSGRSDD) form an LID region. Arg-132 lines the ATP pocket. Positions 138 and 149 each coordinate a ribonucleoside 5'-phosphate. Arg-177 lines the ATP pocket.

This sequence belongs to the adenylate kinase family. UMP-CMP kinase subfamily. In terms of assembly, monomer. The cofactor is Mg(2+).

The protein localises to the cytoplasm. The protein resides in the nucleus. The catalysed reaction is CMP + ATP = CDP + ADP. The enzyme catalyses dCMP + ATP = dCDP + ADP. It carries out the reaction UMP + ATP = UDP + ADP. Its function is as follows. Catalyzes the phosphorylation of pyrimidine nucleoside monophosphates at the expense of ATP. Plays an important role in de novo pyrimidine nucleotide biosynthesis. Has preference for UMP and CMP as phosphate acceptors. This chain is UMP-CMP kinase, found in Dictyostelium discoideum (Social amoeba).